Reading from the N-terminus, the 344-residue chain is S-adenosylmethionine:tRNA ribosyltransferase-isomerase (344 aa).

This sequence belongs to the QueA family. As to quaternary structure, monomer.

It is found in the cytoplasm. It catalyses the reaction 7-aminomethyl-7-carbaguanosine(34) in tRNA + S-adenosyl-L-methionine = epoxyqueuosine(34) in tRNA + adenine + L-methionine + 2 H(+). It participates in tRNA modification; tRNA-queuosine biosynthesis. Functionally, transfers and isomerizes the ribose moiety from AdoMet to the 7-aminomethyl group of 7-deazaguanine (preQ1-tRNA) to give epoxyqueuosine (oQ-tRNA). The protein is S-adenosylmethionine:tRNA ribosyltransferase-isomerase of Thiobacillus denitrificans (strain ATCC 25259 / T1).